A 270-amino-acid chain; its full sequence is Phosphatidylglycerol--prolipoprotein diacylglyceryl transferase (270 aa).

A run of 7 helical transmembrane segments spans residues 14-34, 60-80, 95-115, 128-148, 176-196, 202-222, and 238-258; these read VIFEIGPIGLRWYGLMYLLGF, LLFNGFMGVFLGGRIGYVLFY, VWEGGMSFHGGLIGVILAMLI, ADFVAPLIPFGLGMGRIGNFI, SQLYEAVLEGIVLFFILNWYI, IGATAGLFLLGYGIFRFIVEF, and ISMGQILSTPMILIGAVIMLV. Residue Arg143 coordinates a 1,2-diacyl-sn-glycero-3-phospho-(1'-sn-glycerol).

The protein belongs to the Lgt family.

The protein resides in the cell inner membrane. The catalysed reaction is L-cysteinyl-[prolipoprotein] + a 1,2-diacyl-sn-glycero-3-phospho-(1'-sn-glycerol) = an S-1,2-diacyl-sn-glyceryl-L-cysteinyl-[prolipoprotein] + sn-glycerol 1-phosphate + H(+). The protein operates within protein modification; lipoprotein biosynthesis (diacylglyceryl transfer). In terms of biological role, catalyzes the transfer of the diacylglyceryl group from phosphatidylglycerol to the sulfhydryl group of the N-terminal cysteine of a prolipoprotein, the first step in the formation of mature lipoproteins. The chain is Phosphatidylglycerol--prolipoprotein diacylglyceryl transferase from Pasteurella multocida (strain Pm70).